Here is a 219-residue protein sequence, read N- to C-terminus: 2-C-methyl-D-erythritol 4-phosphate cytidylyltransferase (219 aa).

The protein belongs to the IspD/TarI cytidylyltransferase family. IspD subfamily.

The enzyme catalyses 2-C-methyl-D-erythritol 4-phosphate + CTP + H(+) = 4-CDP-2-C-methyl-D-erythritol + diphosphate. It participates in isoprenoid biosynthesis; isopentenyl diphosphate biosynthesis via DXP pathway; isopentenyl diphosphate from 1-deoxy-D-xylulose 5-phosphate: step 2/6. Catalyzes the formation of 4-diphosphocytidyl-2-C-methyl-D-erythritol from CTP and 2-C-methyl-D-erythritol 4-phosphate (MEP). This Endomicrobium trichonymphae protein is 2-C-methyl-D-erythritol 4-phosphate cytidylyltransferase.